The following is a 278-amino-acid chain: Octanoyltransferase LipM (278 aa).

The BPL/LPL catalytic domain maps to Gly33–Leu248. Residue Cys150 is the Acyl-thioester intermediate of the active site.

This sequence belongs to the octanoyltransferase LipM family. In terms of assembly, monomer.

It catalyses the reaction octanoyl-[ACP] + L-lysyl-[protein] = N(6)-octanoyl-L-lysyl-[protein] + holo-[ACP] + H(+). The protein operates within protein modification; protein lipoylation via endogenous pathway; protein N(6)-(lipoyl)lysine from octanoyl-[acyl-carrier-protein]. Its function is as follows. Catalyzes the transfer of endogenously produced octanoic acid from octanoyl-acyl-carrier-protein onto the lipoyl domain of GcvH, an intermediate carrier during protein lipoylation. This is Octanoyltransferase LipM from Anoxybacillus flavithermus (strain DSM 21510 / WK1).